The following is a 254-amino-acid chain: Phytolongin Phyl1.1 (254 aa).

Residues 12-113 (CVSRDNQILY…TAMIGSINVE (102 aa)) form the Longin domain. Residues 138–173 (ELKSSNLGEQSEGSNSTKAPLLGRLSKQEKKKGKDH) form a disordered region. A compositionally biased stretch (polar residues) spans 145–155 (GEQSEGSNSTK). A helical; Anchor for type IV membrane protein membrane pass occupies residues 226-246 (IVLAIDAAICLTLFGIWLAIC).

This sequence belongs to the synaptobrevin family.

It is found in the membrane. Functionally, non-SNARE longin protein involved in membrane-trafficking machinery. The sequence is that of Phytolongin Phyl1.1 from Arabidopsis thaliana (Mouse-ear cress).